The primary structure comprises 553 residues: Transcription factor GAMYB (553 aa).

Basic and acidic residues predominate over residues 1–17; the sequence is MYRVKSESDCDMIHQEQ. The segment at 1–45 is disordered; it reads MYRVKSESDCDMIHQEQMDSPVADDGSSGGSPHRGGGPPLKKGPW. The segment covering 27-38 has biased composition (gly residues); sequence SSGGSPHRGGGP. HTH myb-type domains lie at 37 to 89 and 90 to 144; these read GPPL…ANHL and RPNL…KRCQ. 2 DNA-binding regions (H-T-H motif) span residues 65-89 and 117-140; these read WNAVQKNTGLFRCGKSCRLRWANHL and WARMAAHLPGRTDNEIKNYWNTRI. The disordered stretch occupies residues 464-489; sequence PAQSTSMGSGEQVMGPKYEPGDTSPH.

As to quaternary structure, interacts with MYBS1. As to expression, expressed in aleurone cells, inflorescence shoot apical region, stamen primordia, and tapetum cells of the anther. Expressed at low level in roots and vegetative shoots.

It localises to the nucleus. In terms of biological role, transcriptional activator of gibberellin-dependent alpha-amylase expression in aleurone cells. Involved in pollen and floral organs development. May bind to the 5'-TAACAAA-3' box of alpha-amylase promoter. Required for anther development. Functions in parallel with UDT1 to regulate early anther development. Functions upstream of the transcription factor TDR and may positively regulate its transcription. Required for pollen development. Probably required for controlling tapetal cell size and promoting tapetal programmed cell death (PCD) during anther development. Required for exine and Ubisch body formation in anthers. Interacts with the DNA specific motifs of giberrellin-up-regulated genes of anthers and regulates their expression. Positively regulates the expression of the laurate hydroxylase CYP703A3, known to be essential for the development of pollen exine and anther epicuticular layer. Functions with MYBS1 to integrate diverse nutrient starvation and gibberellin (GA) signaling pathways during germination of grains. Sugar, nitrogen and phosphate starvation signals converge and interconnect with GA to promote the co-nuclear import of GAMYB and MYBS1, resulting in the expression of a large set of GA-inducible hydrolases, transporters and regulators that are essential for mobilization of nutrient reserves in the endosperm to support seedling growth. This Oryza sativa subsp. japonica (Rice) protein is Transcription factor GAMYB.